The primary structure comprises 257 residues: Small ribosomal subunit protein uS2 (257 aa).

It belongs to the universal ribosomal protein uS2 family.

This Bartonella quintana (strain Toulouse) (Rochalimaea quintana) protein is Small ribosomal subunit protein uS2.